Reading from the N-terminus, the 366-residue chain is Heat-inducible transcription repressor HrcA (366 aa).

A compositionally biased stretch (polar residues) spans 298–309 (SSGYGQSSTPSA). The tract at residues 298–318 (SSGYGQSSTPSANVEHEEYDT) is disordered.

This sequence belongs to the HrcA family.

In terms of biological role, negative regulator of class I heat shock genes (grpE-dnaK-dnaJ and groELS operons). Prevents heat-shock induction of these operons. The protein is Heat-inducible transcription repressor HrcA of Bifidobacterium animalis subsp. lactis (strain AD011).